Here is a 121-residue protein sequence, read N- to C-terminus: Large ribosomal subunit protein bL20 (121 aa).

It belongs to the bacterial ribosomal protein bL20 family.

Its function is as follows. Binds directly to 23S ribosomal RNA and is necessary for the in vitro assembly process of the 50S ribosomal subunit. It is not involved in the protein synthesizing functions of that subunit. In Moorella thermoacetica (strain ATCC 39073 / JCM 9320), this protein is Large ribosomal subunit protein bL20.